We begin with the raw amino-acid sequence, 114 residues long: NADH-ubiquinone oxidoreductase chain 3 (114 aa).

3 consecutive transmembrane segments (helical) span residues 4-24, 55-75, and 82-102; these read LVYI…SYLL, FYLI…ILPF, and VSLL…IGFI.

It belongs to the complex I subunit 3 family.

It localises to the mitochondrion membrane. The catalysed reaction is a ubiquinone + NADH + 5 H(+)(in) = a ubiquinol + NAD(+) + 4 H(+)(out). Its function is as follows. Core subunit of the mitochondrial membrane respiratory chain NADH dehydrogenase (Complex I) that is believed to belong to the minimal assembly required for catalysis. Complex I functions in the transfer of electrons from NADH to the respiratory chain. The immediate electron acceptor for the enzyme is believed to be ubiquinone. The chain is NADH-ubiquinone oxidoreductase chain 3 (ND3) from Allomyces macrogynus.